Reading from the N-terminus, the 207-residue chain is Fibronectin type III domain-containing protein 5b (207 aa).

The first 26 residues, 1 to 26, serve as a signal peptide directing secretion; the sequence is MWGIKGSFAVLLLLFLAYIFASSVNA. The Extracellular portion of the chain corresponds to 27–146; sequence DSLSAPLNVT…EEVGQAAQLR (120 aa). The Fibronectin type-III domain maps to 31 to 122; sequence APLNVTIKAL…EPVLFRTPKE (92 aa). Residues Asn-34 and Asn-79 are each glycosylated (N-linked (GlcNAc...) asparagine). A helical membrane pass occupies residues 147-167; it reads AGELIIIVVVLVMWAGVIALF. The Cytoplasmic portion of the chain corresponds to 168–207; that stretch reads CRQYDIIKDNEPNNNKDKAKNSSECSTPEHPTGGLLRSKV. Over residues 178-188 the composition is skewed to basic and acidic residues; the sequence is EPNNNKDKAKN. The tract at residues 178 to 207 is disordered; sequence EPNNNKDKAKNSSECSTPEHPTGGLLRSKV. Positions 205–207 match the Microbody targeting signal motif; it reads SKV.

As to quaternary structure, dimer; may exist in other oligomeric forms. The extracellular domain is cleaved and released from the cell membrane.

The protein localises to the cell membrane. Its subcellular location is the peroxisome membrane. It is found in the secreted. In terms of biological role, may mediate beneficial effects of muscular exercise. The protein is Fibronectin type III domain-containing protein 5b (fndc5b) of Danio rerio (Zebrafish).